Reading from the N-terminus, the 149-residue chain is FAD synthase (149 aa).

ATP-binding positions include 10–11 (TF), 15–18 (HPGH), aspartate 95, and tyrosine 123.

It belongs to the archaeal FAD synthase family. Homodimer. Requires Co(2+) as cofactor.

The catalysed reaction is FMN + ATP + H(+) = FAD + diphosphate. It functions in the pathway cofactor biosynthesis; FAD biosynthesis; FAD from FMN: step 1/1. Is inhibited by the product PPi. Catalyzes the transfer of the AMP portion of ATP to flavin mononucleotide (FMN) to produce flavin adenine dinucleotide (FAD) coenzyme. To a lesser extent, is also able to utilize other nucleotides such as CTP and GTP as substrates, producing the modified coenzymes, flavin cytosine dinucleotide (FCD) and flavin guanine dinucleotide (FGD), respectively. Does not catalyze the reverse reaction to produce FMN and ATP from FAD and PPi. Does not function as a glycerol-3-phosphate cytidylyltransferase, as previously annotated in the complete genome. This Methanocaldococcus jannaschii (strain ATCC 43067 / DSM 2661 / JAL-1 / JCM 10045 / NBRC 100440) (Methanococcus jannaschii) protein is FAD synthase (ribL).